The primary structure comprises 126 residues: Small ribosomal subunit protein uS12 (126 aa).

A disordered region spans residues 1–26 (MPTINQLVRKGRASETTKSKSPALQD). D89 is subject to 3-methylthioaspartic acid. Residues 102–126 (LDTQGVKDRRQARSKYGAKRAKAAK) are disordered. Basic residues predominate over residues 113–126 (ARSKYGAKRAKAAK).

The protein belongs to the universal ribosomal protein uS12 family. As to quaternary structure, part of the 30S ribosomal subunit. Contacts proteins S8 and S17. May interact with IF1 in the 30S initiation complex.

In terms of biological role, with S4 and S5 plays an important role in translational accuracy. Its function is as follows. Interacts with and stabilizes bases of the 16S rRNA that are involved in tRNA selection in the A site and with the mRNA backbone. Located at the interface of the 30S and 50S subunits, it traverses the body of the 30S subunit contacting proteins on the other side and probably holding the rRNA structure together. The combined cluster of proteins S8, S12 and S17 appears to hold together the shoulder and platform of the 30S subunit. The sequence is that of Small ribosomal subunit protein uS12 from Burkholderia mallei (strain ATCC 23344).